The chain runs to 1124 residues: Sodium/hydrogen exchanger 11 (1124 aa).

Transmembrane regions (helical) follow at residues 25-45 (LVEE…GGLL), 52-72 (CEVI…HMAY), 90-110 (FSLY…DVEF), 120-140 (VLLT…YVVI), 179-199 (IYID…SIFF), 224-244 (DILG…CILA), 254-274 (IILC…LGMS), 305-325 (IFSS…IGCG), 335-355 (IPFI…TILL), 372-392 (GVVI…APDV), and 405-425 (MFIL…SYVM). N-linked (GlcNAc...) asparagine glycosylation is found at Asn-447 and Asn-473. 4 helical membrane-spanning segments follow: residues 612-632 (TGQI…WPMA), 641-661 (ISIN…KIII), 674-694 (LEFF…FVKL), and 706-726 (VIMG…IVPI). The interval 642 to 723 (SINYYFMFLY…IRFLPLFKII (82 aa)) is ion transport-like. 867–999 (IWLEGKDVLI…EYKIWLKLAL (133 aa)) serves as a coordination point for a nucleoside 3',5'-cyclic phosphate.

Belongs to the monovalent cation:proton antiporter 1 (CPA1) transporter (TC 2.A.36) family.

It is found in the membrane. Functionally, involved in pH regulation. The sequence is that of Sodium/hydrogen exchanger 11 (SLC9C2) from Homo sapiens (Human).